A 278-amino-acid chain; its full sequence is 4-diphosphocytidyl-2-C-methyl-D-erythritol kinase (278 aa).

The active site involves K9. 89–99 (PVASGIGGGSA) serves as a coordination point for ATP. D128 is an active-site residue.

It belongs to the GHMP kinase family. IspE subfamily.

It carries out the reaction 4-CDP-2-C-methyl-D-erythritol + ATP = 4-CDP-2-C-methyl-D-erythritol 2-phosphate + ADP + H(+). It participates in isoprenoid biosynthesis; isopentenyl diphosphate biosynthesis via DXP pathway; isopentenyl diphosphate from 1-deoxy-D-xylulose 5-phosphate: step 3/6. In terms of biological role, catalyzes the phosphorylation of the position 2 hydroxy group of 4-diphosphocytidyl-2C-methyl-D-erythritol. In Cereibacter sphaeroides (strain ATCC 17029 / ATH 2.4.9) (Rhodobacter sphaeroides), this protein is 4-diphosphocytidyl-2-C-methyl-D-erythritol kinase.